Reading from the N-terminus, the 552-residue chain is Hydroxylamine reductase (552 aa).

[2Fe-2S] cluster-binding residues include Cys5, Cys8, Cys20, and Cys27. 8 residues coordinate hybrid [4Fe-2O-2S] cluster: His251, Glu275, Cys319, Cys407, Cys435, Cys460, Glu494, and Lys496. Cys407 is modified (cysteine persulfide).

Belongs to the HCP family. It depends on [2Fe-2S] cluster as a cofactor. Hybrid [4Fe-2O-2S] cluster serves as cofactor.

The protein localises to the cytoplasm. The enzyme catalyses A + NH4(+) + H2O = hydroxylamine + AH2 + H(+). In terms of biological role, catalyzes the reduction of hydroxylamine to form NH(3) and H(2)O. The polypeptide is Hydroxylamine reductase (Escherichia coli (strain UTI89 / UPEC)).